We begin with the raw amino-acid sequence, 470 residues long: Angiopoietin-related protein 6 (470 aa).

Residues 1–20 (MGKPWLRALQLLLLLGASWA) form the signal peptide. Asn-58 carries an N-linked (GlcNAc...) asparagine glycan. Positions 59–116 (ASELAALRMRVGRHEELLRELQRLAAADGAVAGEVRALRKESRGLSARLGQLRAQLQH) form a coiled coil. Residue Asn-145 is glycosylated (N-linked (GlcNAc...) (complex) asparagine). Positions 214–249 (SDTSRMLDPAPEPQRDQTQRQQEPMASPMPAGHPAV) are disordered. The region spanning 251–469 (TKPVGPWQDC…KAAMLIRPLK (219 aa)) is the Fibrinogen C-terminal domain. 2 disulfides stabilise this stretch: Cys-260/Cys-287 and Cys-410/Cys-423.

The protein localises to the secreted. May play a role in the wound healing process. May promote epidermal proliferation, remodeling and regeneration. May promote the chemotactic activity of endothelial cells and induce neovascularization. May counteract high-fat diet-induced obesity and related insulin resistance through increased energy expenditure. The chain is Angiopoietin-related protein 6 (ANGPTL6) from Homo sapiens (Human).